Consider the following 122-residue polypeptide: Large ribosomal subunit protein uL14c (122 aa).

Belongs to the universal ribosomal protein uL14 family. In terms of assembly, part of the 50S ribosomal subunit.

It localises to the plastid. The protein resides in the chloroplast. In terms of biological role, binds to 23S rRNA. This Calycanthus floridus var. glaucus (Eastern sweetshrub) protein is Large ribosomal subunit protein uL14c.